A 202-amino-acid chain; its full sequence is dITP/XTP pyrophosphatase (202 aa).

8-13 (TKNMGK) contacts substrate. 2 residues coordinate Mg(2+): glutamate 41 and aspartate 70. Aspartate 70 functions as the Proton acceptor in the catalytic mechanism. Residues serine 71, 155-158 (FGYD), lysine 178, and 183-184 (HR) contribute to the substrate site.

It belongs to the HAM1 NTPase family. Homodimer. Requires Mg(2+) as cofactor.

It catalyses the reaction XTP + H2O = XMP + diphosphate + H(+). The catalysed reaction is dITP + H2O = dIMP + diphosphate + H(+). It carries out the reaction ITP + H2O = IMP + diphosphate + H(+). Its function is as follows. Pyrophosphatase that catalyzes the hydrolysis of nucleoside triphosphates to their monophosphate derivatives, with a high preference for the non-canonical purine nucleotides XTP (xanthosine triphosphate), dITP (deoxyinosine triphosphate) and ITP. Seems to function as a house-cleaning enzyme that removes non-canonical purine nucleotides from the nucleotide pool, thus preventing their incorporation into DNA/RNA and avoiding chromosomal lesions. This is dITP/XTP pyrophosphatase from Bacillus anthracis.